A 217-amino-acid chain; its full sequence is Oxygen regulatory protein NreC (217 aa).

The Response regulatory domain maps to 2 to 119 (KIVIADDHAV…QLLLAIRTVY (118 aa)). Asp-53 is modified (4-aspartylphosphate). Residues 148-213 (TTDPFKILSK…ELVEYALKKK (66 aa)) form the HTH luxR-type domain. The H-T-H motif DNA-binding region spans 172–191 (NKEIAEKLFVSVKTVEAHKT).

Phosphorylated by NreB.

The protein resides in the cytoplasm. Its function is as follows. Member of the two-component regulatory system NreB/NreC involved in the control of dissimilatory nitrate/nitrite reduction in response to oxygen. Phosphorylated NreC binds to a GC-rich palindromic sequence at the promoters of the nitrate (narGHJI) and nitrite (nir) reductase operons, as well as the putative nitrate transporter gene narT, and activates their expression. The protein is Oxygen regulatory protein NreC (nreC) of Staphylococcus aureus (strain USA300 / TCH1516).